Here is a 472-residue protein sequence, read N- to C-terminus: Protein c-ets-2-A (472 aa).

A PNT domain is found at 85-170 (NTFNGFAKKR…EHLEEMMKEH (86 aa)). A DNA-binding region (ETS) is located at residues 366 to 446 (IQLWQFLLEL…SGKRYVYRFV (81 aa)).

It belongs to the ETS family.

It localises to the nucleus. Its function is as follows. Probable transcription factor. The chain is Protein c-ets-2-A (ets2-a) from Xenopus laevis (African clawed frog).